We begin with the raw amino-acid sequence, 312 residues long: MSGIQPVPGAKPLSMWQQYGPSEKTVRGIVIGGITGGIEICITFPTEYVKTQLQLDERSATPKFRGPIDCVKQTVNGHGFFGLYRGLSVLLYGSIPKSSFRFGTFEYLKSQAADERGNLSPVMRLLCGLGAGLSEAVFAVTPMETVKVKFIHDQGLAQPKYKGFVHGVGCIVKAEGLGGIYKGVTATMAKQGSNQAIRFFVMETLKDWYRGGDNTQPISKPIVGLMGAVAGAASVYGNTPIDVVKTRMQGLEAKKYKNTLDCAMQIWKKEGFFAFYKGTVPRLSRVCLDVGITFMIYDSIIEFLDVYWKKQQ.

3 Solcar repeats span residues 23–111 (EKTV…LKSQ), 122–208 (VMRL…LKDW), and 218–303 (ISKP…IIEF). 6 helical membrane passes run 29–49 (IVIG…TEYV), 75–95 (VNGH…YGSI), 126–146 (LCGL…METV), 164–184 (FVHG…YKGV), 221–241 (PIVG…NTPI), and 286–306 (VCLD…FLDV).

It belongs to the mitochondrial carrier (TC 2.A.29) family.

It localises to the mitochondrion inner membrane. Functionally, transport of citrate across inner mitochondrial membrane. The sequence is that of Putative tricarboxylate transport protein, mitochondrial from Caenorhabditis elegans.